The following is a 181-amino-acid chain: ATP-dependent protease subunit HslV (181 aa).

Threonine 7 is a catalytic residue. Positions 162, 165, and 168 each coordinate Na(+).

It belongs to the peptidase T1B family. HslV subfamily. In terms of assembly, a double ring-shaped homohexamer of HslV is capped on each side by a ring-shaped HslU homohexamer. The assembly of the HslU/HslV complex is dependent on binding of ATP.

It is found in the cytoplasm. It carries out the reaction ATP-dependent cleavage of peptide bonds with broad specificity.. Its activity is regulated as follows. Allosterically activated by HslU binding. In terms of biological role, protease subunit of a proteasome-like degradation complex believed to be a general protein degrading machinery. This Coxiella burnetii (strain RSA 493 / Nine Mile phase I) protein is ATP-dependent protease subunit HslV.